We begin with the raw amino-acid sequence, 388 residues long: uncharacterized protein (388 aa).

Belongs to the glycosyltransferase 28 family.

This is an uncharacterized protein from Methanosarcina acetivorans (strain ATCC 35395 / DSM 2834 / JCM 12185 / C2A).